The chain runs to 311 residues: MQEIQKNTKKEQYNLNKLQKRLRRNVGEAIADFNMIEEGDRIMVCLSGGKDSYTMLEILRNLQQSAPINFSLVAVNLDQKQPGFPEHILPAYLEQLGVEYKIVEENTYGIVKEKIPEGKTTCSLCSRLRRGILYRTATELGATKIALGHHRDDILQTLFLNMFYGGKMKGMPPKLMSDDGKHIVIRPLAYCREKDIIRFAEAKAFPIIPCNLCGSQPNLQRQVIADMLRDWDKRYPGRIETMFSAMQNVVPSHLCDTNLFDFKGITHGSEVVDGGDLAFDREEIPLQPAGWQPEEDDTSVEALRLDVIEVK.

Positions 47–52 (SGGKDS) match the PP-loop motif motif. 3 residues coordinate [4Fe-4S] cluster: C122, C125, and C213.

The protein belongs to the TtcA family. As to quaternary structure, homodimer. It depends on Mg(2+) as a cofactor. The cofactor is [4Fe-4S] cluster.

It is found in the cytoplasm. It catalyses the reaction cytidine(32) in tRNA + S-sulfanyl-L-cysteinyl-[cysteine desulfurase] + AH2 + ATP = 2-thiocytidine(32) in tRNA + L-cysteinyl-[cysteine desulfurase] + A + AMP + diphosphate + H(+). It functions in the pathway tRNA modification. Functionally, catalyzes the ATP-dependent 2-thiolation of cytidine in position 32 of tRNA, to form 2-thiocytidine (s(2)C32). The sulfur atoms are provided by the cysteine/cysteine desulfurase (IscS) system. The protein is tRNA-cytidine(32) 2-sulfurtransferase of Salmonella paratyphi B (strain ATCC BAA-1250 / SPB7).